Here is a 316-residue protein sequence, read N- to C-terminus: uncharacterized protein (316 aa).

The protein to yeast YGR277c.

This is an uncharacterized protein from Schizosaccharomyces pombe (strain 972 / ATCC 24843) (Fission yeast).